Reading from the N-terminus, the 687-residue chain is Glycine--tRNA ligase beta subunit (687 aa).

This sequence belongs to the class-II aminoacyl-tRNA synthetase family. In terms of assembly, tetramer of two alpha and two beta subunits.

The protein resides in the cytoplasm. The catalysed reaction is tRNA(Gly) + glycine + ATP = glycyl-tRNA(Gly) + AMP + diphosphate. The protein is Glycine--tRNA ligase beta subunit of Geotalea daltonii (strain DSM 22248 / JCM 15807 / FRC-32) (Geobacter daltonii).